The sequence spans 438 residues: sn-glycerol-3-phosphate-binding periplasmic protein UgpB (438 aa).

An N-terminal signal peptide occupies residues 1-23 (MKPLRYTASALALGLALMANAQA). Residues Tyr-65, Glu-89, Ser-144, Ser-270, Gly-307, Tyr-346, and Arg-397 each coordinate sn-glycerol 3-phosphate.

This sequence belongs to the bacterial solute-binding protein 1 family. As to quaternary structure, the complex is composed of two ATP-binding proteins (UgpC), two transmembrane proteins (UgpA and UgpE) and a solute-binding protein (UgpB).

It localises to the periplasm. Functionally, part of the ABC transporter complex UgpBAEC involved in sn-glycerol-3-phosphate (G3P) import. Binds G3P. The protein is sn-glycerol-3-phosphate-binding periplasmic protein UgpB (ugpB) of Escherichia coli O1:K1 / APEC.